Here is a 77-residue protein sequence, read N- to C-terminus: MKEQKWIHEGLITESLPNGMFWVRLDNEDPILGYVSGRIRRSSIRILPGDRVKIEVSRYDSTRGRIIYRLRNKDSND.

One can recognise an S1-like domain in the interval 1-71 (MKEQKWIHEG…TRGRIIYRLR (71 aa)).

The protein belongs to the IF-1 family. In terms of assembly, component of the 30S ribosomal translation pre-initiation complex which assembles on the 30S ribosome in the order IF-2 and IF-3, IF-1 and N-formylmethionyl-tRNA(fMet); mRNA recruitment can occur at any time during PIC assembly.

The protein localises to the plastid. It localises to the chloroplast. Functionally, one of the essential components for the initiation of protein synthesis. Stabilizes the binding of IF-2 and IF-3 on the 30S subunit to which N-formylmethionyl-tRNA(fMet) subsequently binds. Helps modulate mRNA selection, yielding the 30S pre-initiation complex (PIC). Upon addition of the 50S ribosomal subunit IF-1, IF-2 and IF-3 are released leaving the mature 70S translation initiation complex. The chain is Translation initiation factor IF-1, chloroplastic from Spinacia oleracea (Spinach).